We begin with the raw amino-acid sequence, 105 residues long: Nitrogen fixation nifHD region glnB-like protein 1 (105 aa).

It belongs to the P(II) protein family.

In terms of biological role, could be involved in the regulation of nitrogen fixation. This Methanococcus maripaludis (Methanococcus deltae) protein is Nitrogen fixation nifHD region glnB-like protein 1 (glnBI).